We begin with the raw amino-acid sequence, 82 residues long: Cytochrome b559 subunit alpha (82 aa).

A helical transmembrane segment spans residues 21-35 (VIHSITIPALFIAGW). His-23 lines the heme pocket.

This sequence belongs to the PsbE/PsbF family. As to quaternary structure, heterodimer of an alpha subunit and a beta subunit. PSII is composed of 1 copy each of membrane proteins PsbA, PsbB, PsbC, PsbD, PsbE, PsbF, PsbH, PsbI, PsbJ, PsbK, PsbL, PsbM, PsbT, PsbX, PsbY, PsbZ, Psb30/Ycf12, peripheral proteins PsbO, CyanoQ (PsbQ), PsbU, PsbV and a large number of cofactors. It forms dimeric complexes. The cofactor is heme b.

The protein localises to the cellular thylakoid membrane. In terms of biological role, this b-type cytochrome is tightly associated with the reaction center of photosystem II (PSII). PSII is a light-driven water:plastoquinone oxidoreductase that uses light energy to abstract electrons from H(2)O, generating O(2) and a proton gradient subsequently used for ATP formation. It consists of a core antenna complex that captures photons, and an electron transfer chain that converts photonic excitation into a charge separation. The chain is Cytochrome b559 subunit alpha from Nostoc sp. (strain PCC 7120 / SAG 25.82 / UTEX 2576).